Consider the following 341-residue polypeptide: Probable galacturonosyltransferase-like 2 (341 aa).

Over Met1–Lys4 the chain is Cytoplasmic. A helical; Signal-anchor for type II membrane protein transmembrane segment spans residues Phe5–Gly22. Topologically, residues Glu23–Ser341 are lumenal. Asn190 carries N-linked (GlcNAc...) asparagine glycosylation.

It belongs to the glycosyltransferase 8 family.

Its subcellular location is the golgi apparatus membrane. Its pathway is glycan metabolism; pectin biosynthesis. Its function is as follows. May be involved in pectin and/or xylans biosynthesis in cell walls. The sequence is that of Probable galacturonosyltransferase-like 2 (GATL2) from Arabidopsis thaliana (Mouse-ear cress).